A 499-amino-acid chain; its full sequence is Membrane-associated tyrosine- and threonine-specific cdc2-inhibitory kinase (499 aa).

N-acetylmethionine is present on M1. Residues 1–29 form a disordered region; it reads MLERPPALAMPMPTEGTPPPLSGTPIPVP. The segment covering 16–28 has biased composition (pro residues); it reads GTPPPLSGTPIPV. Position 17 is a phosphothreonine (T17). The residue at position 40 (S40) is a Phosphoserine. The tract at residues 42–72 is disordered; the sequence is KRPRGLSRSLPPPPPAKGSIPISRLFPPRTP. Phosphoserine is present on residues S94 and S120. In terms of domain architecture, Protein kinase spans 110 to 359; the sequence is FQRLSRLGHG…AEALLALPVL (250 aa). ATP-binding positions include 116 to 124 and K139; that span reads LGHGSYGEV. Phosphoserine is present on residues S143 and S160. D233 acts as the Proton acceptor in catalysis. The Mg(2+) site is built by N238, D251, and G253. Residues 382–398 carry the Membrane-association motif motif; that stretch reads LWQALLALLCWLWHGLA. An interaction with PIN1 region spans residues 398–499; sequence AHPASWLQPL…SLFEDTLDPT (102 aa). Position 426 is a phosphoserine; by PLK1 (S426). The segment at 437 to 499 is interaction with CDC2-CCNB1; that stretch reads GPSLSPEAVL…SLFEDTLDPT (63 aa). The disordered stretch occupies residues 451 to 485; it reads GSTSTPRSRCTPRDALDLSDINSEPPRGSFPSFEP. A phosphoserine mark is found at S469, S473, and S482. T495 carries the post-translational modification Phosphothreonine; by PLK1.

This sequence belongs to the protein kinase superfamily. Ser/Thr protein kinase family. WEE1 subfamily. Interacts with CDC2-CCNB1 complex. Can also interact with PIN1 when phosphorylated by CDC2-CCNB1. In terms of processing, autophosphorylated. Phosphorylated by CDC2-CCNB1 complexes on undefined serine and threonine residues. The phosphorylation by CDC2-CCNB1 complexes may inhibit the catalytic activity.

It localises to the endoplasmic reticulum membrane. The protein localises to the golgi apparatus membrane. It carries out the reaction L-seryl-[protein] + ATP = O-phospho-L-seryl-[protein] + ADP + H(+). The enzyme catalyses L-threonyl-[protein] + ATP = O-phospho-L-threonyl-[protein] + ADP + H(+). With respect to regulation, negatively regulated by hyperphosphorylation during mitosis. The hyperphosphorylated form does not associate with CCNB1-CDC2 complexes. The PLK1 protein kinase may be required for mitotic phosphorylation. Functionally, acts as a negative regulator of entry into mitosis (G2 to M transition) by phosphorylation of the CDK1 kinase specifically when CDK1 is complexed to cyclins. Mediates phosphorylation of CDK1 predominantly on 'Thr-14'. Also involved in Golgi fragmentation. May be involved in phosphorylation of CDK1 on 'Tyr-15' to a lesser degree, however tyrosine kinase activity is unclear and may be indirect. The chain is Membrane-associated tyrosine- and threonine-specific cdc2-inhibitory kinase (PKMYT1) from Homo sapiens (Human).